The following is a 553-amino-acid chain: Ergothioneine transport permease/ergothioneine binding protein EgtU (553 aa).

The region spanning 57–236 is the ABC transmembrane type-1 domain; it reads LAQHFIIVAL…LFSVLADKFV (180 aa). Helical transmembrane passes span 61–81, 98–118, 122–142, 182–202, 219–239, and 261–281; these read FIIV…IGVF, FLYT…IGVG, ALLV…YNAL, IAVV…AGGL, VAGS…VSVF, and VYTN…WLIP. The Periplasmic portion of the chain corresponds to 282–553; sequence RNAIEEKPLV…AKDFLERLGL (272 aa). Residues 288–549 are ergothioneine binding domain; the sequence is KPLVVATKPS…PKIVAKDFLE (262 aa).

The protein in the N-terminal section; belongs to the binding-protein-dependent transport system permease family. This sequence in the C-terminal section; belongs to the OsmX family. The complex is composed of two ATP-binding proteins (EgtV) and two transmembrane proteins (EgtU).

It localises to the cell inner membrane. In terms of biological role, part of the ABC transporter complex EgtUV involved in the uptake of ergothioneine (EGT), a natural low-molecular weight (LMW) thiol antioxidant which protects H.pylori against bleach stress. Responsible for the translocation of the substrate across the membrane. Also contains a C-terminal periplasmic solute-binding domain (SBD) which binds to ergothioneine with low-micromolar affinity. Cannot bind the structurally similar compounds glycine betaine, choline, proline, carnitine or histidine. The polypeptide is Ergothioneine transport permease/ergothioneine binding protein EgtU (Helicobacter pylori (strain G27)).